We begin with the raw amino-acid sequence, 310 residues long: L-lactate dehydrogenase (310 aa).

NAD(+)-binding positions include Val11, Asp32, Tyr62, and Gly76–Val77. Residues Gln79, Arg85, and Asn117–Asp120 contribute to the substrate site. NAD(+) is bound by residues Ala115 to Asn117 and Ser140. Asp145–Arg148 provides a ligand contact to substrate. Arg150 and His165 together coordinate beta-D-fructose 1,6-bisphosphate. The Proton acceptor role is filled by His172. Tyr218 is subject to Phosphotyrosine. Thr227 is a substrate binding site.

This sequence belongs to the LDH/MDH superfamily. LDH family. As to quaternary structure, homotetramer.

It is found in the cytoplasm. It carries out the reaction (S)-lactate + NAD(+) = pyruvate + NADH + H(+). The protein operates within fermentation; pyruvate fermentation to lactate; (S)-lactate from pyruvate: step 1/1. Its activity is regulated as follows. Activated by citrate at pH 5. Allosterically activated by fructose 1,6-bisphosphate (FBP) at pH from 5.8 to 7.2. Its function is as follows. Catalyzes the conversion of lactate to pyruvate. This chain is L-lactate dehydrogenase, found in Thermus aquaticus.